Consider the following 114-residue polypeptide: Hydrogenase maturation factor HypA (114 aa).

Ni(2+) is bound at residue H2. Zn(2+)-binding residues include C73, C76, C89, and C92.

The protein belongs to the HypA/HybF family.

Its function is as follows. Involved in the maturation of [NiFe] hydrogenases. Required for nickel insertion into the metal center of the hydrogenase. The protein is Hydrogenase maturation factor HypA of Azoarcus sp. (strain BH72).